The sequence spans 64 residues: Large ribosomal subunit protein uL29 (64 aa).

The protein belongs to the universal ribosomal protein uL29 family.

This Acaryochloris marina (strain MBIC 11017) protein is Large ribosomal subunit protein uL29.